The following is a 248-amino-acid chain: Putative mutator protein MutT4 (248 aa).

Positions 1–64 are disordered; sequence MSDGEQAKSR…GSTRMRTVHE (64 aa). Over residues 9–20 the composition is skewed to basic residues; sequence SRRRRGRRRGRR. The segment covering 31 to 44 has biased composition (low complexity); the sequence is AQPAGDATPTPATA. Residues 45 to 57 are compositionally biased toward basic residues; sequence KRSRSRSPRRGST. Residues 62–198 enclose the Nudix hydrolase domain; sequence VHETSAGGLV…DERRLAEVAD (137 aa). Positions 103, 118, 121, and 122 each coordinate Mg(2+). Positions 103–124 match the Nudix box motif; that stretch reads GHIELGETAEQTAIREVAEETG. The interval 204–248 is disordered; that stretch reads LQSDGPAALPPLPPSSPRRRPQTHSRARHADDSAPGQHNGPGPGP. Residues 220–230 are compositionally biased toward basic residues; sequence PRRRPQTHSRA.

It belongs to the Nudix hydrolase family. Requires Mg(2+) as cofactor. The cofactor is Mn(2+).

Its function is as follows. May be involved in the GO system responsible for removing an oxidatively damaged form of guanine (7,8-dihydro-8-oxoguanine, 8-oxo-dGTP) from DNA and the nucleotide pool. The protein is Putative mutator protein MutT4 (mutT4) of Mycobacterium tuberculosis (strain CDC 1551 / Oshkosh).